The following is a 788-amino-acid chain: Response regulator SSK1 (788 aa).

One can recognise a Response regulatory domain in the interval 534 to 691 (NVLIVEDNII…WLERKVKEWG (158 aa)). Aspartate 583 carries the 4-aspartylphosphate modification.

This sequence belongs to the SSK1 family.

The protein resides in the cytoplasm. Functionally, two-domain response regulator protein in the two-component signal transduction system of the HOG1 pathway. Controls high-osmolarity adaptation and fungicide sensitivity via its regulation of the phosphorylation of HOG1. The protein is Response regulator SSK1 of Cochliobolus heterostrophus (strain C5 / ATCC 48332 / race O) (Southern corn leaf blight fungus).